We begin with the raw amino-acid sequence, 85 residues long: Exodeoxyribonuclease 7 small subunit (85 aa).

It belongs to the XseB family. Heterooligomer composed of large and small subunits.

Its subcellular location is the cytoplasm. The enzyme catalyses Exonucleolytic cleavage in either 5'- to 3'- or 3'- to 5'-direction to yield nucleoside 5'-phosphates.. Bidirectionally degrades single-stranded DNA into large acid-insoluble oligonucleotides, which are then degraded further into small acid-soluble oligonucleotides. In Mycobacterium bovis (strain ATCC BAA-935 / AF2122/97), this protein is Exodeoxyribonuclease 7 small subunit.